Here is a 500-residue protein sequence, read N- to C-terminus: Beta-glucosidase 2 (500 aa).

Residues 1 to 24 form the signal peptide; it reads MGAAAAAGFFFVLLFLSVQGGAVG. Positions 44 and 144 each coordinate a beta-D-glucoside. Glu-190 serves as the catalytic Proton donor. A disulfide bond links Cys-209 and Cys-218. A glycan (N-linked (GlcNAc...) asparagine) is linked at Asn-222. Residues Tyr-334 and Glu-403 each contribute to the a beta-D-glucoside site. The active-site Nucleophile is the Glu-403. N-linked (GlcNAc...) asparagine glycosylation occurs at Asn-410. Position 445 (Trp-445) interacts with a beta-D-glucoside.

Belongs to the glycosyl hydrolase 1 family.

It catalyses the reaction Hydrolysis of terminal, non-reducing beta-D-glucosyl residues with release of beta-D-glucose.. The protein is Beta-glucosidase 2 (BGLU2) of Oryza sativa subsp. japonica (Rice).